The sequence spans 273 residues: NLP effector protein 10 (273 aa).

The signal sequence occupies residues 1–21 (MKLPTFLIGFVALLVTSNGSA). Asn91 is a glycosylation site (N-linked (GlcNAc...) asparagine). Residues 129-139 (AIMYAWYLPRA) carry the Conserved undecapeptide motif motif. The short motif at 149 to 155 (GHRHYWL) is the Conserved heptapeptide motif element.

It belongs to the Necrosis inducing protein (NPP1) family.

The protein localises to the secreted. Secreted effector that acts as a pathogen-associated molecular pattern (PAMP) recognized by the plant immune system. Seems not to induce necrosis in Nicotiana benthamiana leaves but significantly improves disease resistance of Arabidopsis thaliana to Hyaloperonospora arabidopsidis and causes an inhibition of plant growth which is typically associated with enhanced immunity when over-expressed in Arabidopsis. In Plasmopara viticola (Downy mildew of grapevine), this protein is NLP effector protein 10.